Reading from the N-terminus, the 259-residue chain is UPF0246 protein ABBFA_001173 (259 aa).

Belongs to the UPF0246 family.

This chain is UPF0246 protein ABBFA_001173, found in Acinetobacter baumannii (strain AB307-0294).